The chain runs to 307 residues: Lipoyl synthase (307 aa).

Residues cysteine 55, cysteine 60, cysteine 66, cysteine 81, cysteine 85, cysteine 88, and serine 292 each contribute to the [4Fe-4S] cluster site. The Radical SAM core domain occupies 67–281 (WEDREATFLI…ARHAEELGFS (215 aa)).

The protein belongs to the radical SAM superfamily. Lipoyl synthase family. The cofactor is [4Fe-4S] cluster.

It localises to the cytoplasm. It carries out the reaction [[Fe-S] cluster scaffold protein carrying a second [4Fe-4S](2+) cluster] + N(6)-octanoyl-L-lysyl-[protein] + 2 oxidized [2Fe-2S]-[ferredoxin] + 2 S-adenosyl-L-methionine + 4 H(+) = [[Fe-S] cluster scaffold protein] + N(6)-[(R)-dihydrolipoyl]-L-lysyl-[protein] + 4 Fe(3+) + 2 hydrogen sulfide + 2 5'-deoxyadenosine + 2 L-methionine + 2 reduced [2Fe-2S]-[ferredoxin]. It participates in protein modification; protein lipoylation via endogenous pathway; protein N(6)-(lipoyl)lysine from octanoyl-[acyl-carrier-protein]: step 2/2. Its function is as follows. Catalyzes the radical-mediated insertion of two sulfur atoms into the C-6 and C-8 positions of the octanoyl moiety bound to the lipoyl domains of lipoate-dependent enzymes, thereby converting the octanoylated domains into lipoylated derivatives. In Mycolicibacterium paratuberculosis (strain ATCC BAA-968 / K-10) (Mycobacterium paratuberculosis), this protein is Lipoyl synthase.